A 630-amino-acid polypeptide reads, in one-letter code: GTPase-activating protein NEL1 (630 aa).

It belongs to the SEC23/SEC24 family. SEC23 subfamily.

It is found in the cytoplasm. The protein localises to the nucleus. In terms of biological role, acts as a GTPase-activating protein (GAP) for SAR1. Contrary to its SEC23 homolog, NEL1 does not associate with SEC24 and its homologs, nor does it associate with the COPII components, suggesting that it is unlikely that NEL1 functions as a structural component of the vesicle coat machinery. May function as a signaling molecule. The protein is GTPase-activating protein NEL1 of Saccharomyces cerevisiae (strain ATCC 204508 / S288c) (Baker's yeast).